The following is a 444-amino-acid chain: ATP-dependent protease ATPase subunit HslU (444 aa).

ATP-binding positions include isoleucine 20, 62–67, aspartate 257, glutamate 322, and arginine 394; that span reads GVGKTE.

The protein belongs to the ClpX chaperone family. HslU subfamily. As to quaternary structure, a double ring-shaped homohexamer of HslV is capped on each side by a ring-shaped HslU homohexamer. The assembly of the HslU/HslV complex is dependent on binding of ATP.

The protein resides in the cytoplasm. Its function is as follows. ATPase subunit of a proteasome-like degradation complex; this subunit has chaperone activity. The binding of ATP and its subsequent hydrolysis by HslU are essential for unfolding of protein substrates subsequently hydrolyzed by HslV. HslU recognizes the N-terminal part of its protein substrates and unfolds these before they are guided to HslV for hydrolysis. The protein is ATP-dependent protease ATPase subunit HslU of Bordetella avium (strain 197N).